Here is a 212-residue protein sequence, read N- to C-terminus: Acyl-homoserine-lactone synthase (212 aa).

It belongs to the autoinducer synthase family.

The catalysed reaction is a fatty acyl-[ACP] + S-adenosyl-L-methionine = an N-acyl-L-homoserine lactone + S-methyl-5'-thioadenosine + holo-[ACP] + H(+). In terms of biological role, required for the synthesis of OHHL (N-(3-oxohexanoyl)-L-homoserine lactone), an autoinducer molecule which binds to TraR and thus acts in the control of conjugal transfer. The sequence is that of Acyl-homoserine-lactone synthase (traI) from Rhizobium radiobacter (Agrobacterium tumefaciens).